Consider the following 350-residue polypeptide: Protein RecA (350 aa).

68 to 75 (GPESSGKT) serves as a coordination point for ATP.

The protein belongs to the RecA family.

It localises to the cytoplasm. Its function is as follows. Can catalyze the hydrolysis of ATP in the presence of single-stranded DNA, the ATP-dependent uptake of single-stranded DNA by duplex DNA, and the ATP-dependent hybridization of homologous single-stranded DNAs. It interacts with LexA causing its activation and leading to its autocatalytic cleavage. This Mycolicibacterium gilvum (strain PYR-GCK) (Mycobacterium gilvum (strain PYR-GCK)) protein is Protein RecA.